The following is a 406-amino-acid chain: Protein PHYTOCHROME KINASE SUBSTRATE 4 (406 aa).

Positions Ser106–Arg119 are enriched in polar residues. The segment at Ser106–Gly133 is disordered.

This sequence belongs to the PKS family. Interacts in vitro with PHYA and PHYB. In terms of tissue distribution, expressed in the hypocotyl elongation zone. Not found in the root elongation zone.

Modulates phytochrome-mediated control of hypocotyl growth orientation. Involved in PHYA and PHYB signaling. Acts as an inhibitor of asymmetric growth. Not involved in the control of leaf flattening. The protein is Protein PHYTOCHROME KINASE SUBSTRATE 4 (PKS4) of Arabidopsis thaliana (Mouse-ear cress).